A 588-amino-acid polypeptide reads, in one-letter code: Adenine deaminase (588 aa).

This sequence belongs to the metallo-dependent hydrolases superfamily. Adenine deaminase family. Homodimer. It depends on Mn(2+) as a cofactor.

It carries out the reaction adenine + H2O + H(+) = hypoxanthine + NH4(+). This is Adenine deaminase from Escherichia coli (strain K12 / DH10B).